The following is a 121-amino-acid chain: Cysteine-rich neurotrophic factor (121 aa).

An N-terminal signal peptide occupies residues methionine 1–alanine 18. Asparagine 57 is a glycosylation site (N-linked (GlcNAc...) asparagine).

It is found in the secreted. Functionally, interacts with the p75 low-affinity neurotrophin receptor. Evokes neurite outgrowth and modulated calcium currents in pedal motor neurons. May be involved in target-derived trophic support for motor neurons. The sequence is that of Cysteine-rich neurotrophic factor from Lymnaea stagnalis (Great pond snail).